The following is a 702-amino-acid chain: Vertnin (702 aa).

Residues 562-625 form a disordered region; the sequence is VPTLGKGGQE…QGQPHSGPLL (64 aa). Residues 570 to 582 show a composition bias toward basic and acidic residues; that stretch reads QEAEEKQEKEAGR.

The protein belongs to the vertnin family.

Its subcellular location is the nucleus. In terms of biological role, acts as a transcription factor that regulates development of thoracic vertebrae. The sequence is that of Vertnin from Homo sapiens (Human).